A 270-amino-acid chain; its full sequence is Putative pyruvate, phosphate dikinase regulatory protein 2 (270 aa).

An ADP-binding site is contributed by 151 to 158 (GVSRTSKT).

This sequence belongs to the pyruvate, phosphate/water dikinase regulatory protein family. PDRP subfamily.

It carries out the reaction N(tele)-phospho-L-histidyl/L-threonyl-[pyruvate, phosphate dikinase] + ADP = N(tele)-phospho-L-histidyl/O-phospho-L-threonyl-[pyruvate, phosphate dikinase] + AMP + H(+). The catalysed reaction is N(tele)-phospho-L-histidyl/O-phospho-L-threonyl-[pyruvate, phosphate dikinase] + phosphate + H(+) = N(tele)-phospho-L-histidyl/L-threonyl-[pyruvate, phosphate dikinase] + diphosphate. Functionally, bifunctional serine/threonine kinase and phosphorylase involved in the regulation of the pyruvate, phosphate dikinase (PPDK) by catalyzing its phosphorylation/dephosphorylation. This chain is Putative pyruvate, phosphate dikinase regulatory protein 2, found in Listeria monocytogenes serotype 4b (strain F2365).